The primary structure comprises 289 residues: 4-diphosphocytidyl-2-C-methyl-D-erythritol kinase (289 aa).

Lysine 11 is an active-site residue. 95–105 is a binding site for ATP; that stretch reads PMGGGIGGGSS. Aspartate 137 is a catalytic residue.

It belongs to the GHMP kinase family. IspE subfamily.

It carries out the reaction 4-CDP-2-C-methyl-D-erythritol + ATP = 4-CDP-2-C-methyl-D-erythritol 2-phosphate + ADP + H(+). The protein operates within isoprenoid biosynthesis; isopentenyl diphosphate biosynthesis via DXP pathway; isopentenyl diphosphate from 1-deoxy-D-xylulose 5-phosphate: step 3/6. In terms of biological role, catalyzes the phosphorylation of the position 2 hydroxy group of 4-diphosphocytidyl-2C-methyl-D-erythritol. In Aeromonas hydrophila subsp. hydrophila (strain ATCC 7966 / DSM 30187 / BCRC 13018 / CCUG 14551 / JCM 1027 / KCTC 2358 / NCIMB 9240 / NCTC 8049), this protein is 4-diphosphocytidyl-2-C-methyl-D-erythritol kinase.